The sequence spans 193 residues: Ion-translocating oxidoreductase complex subunit A (193 aa).

6 helical membrane-spanning segments follow: residues 5 to 25, 39 to 59, 72 to 92, 102 to 122, 134 to 154, and 171 to 191; these read ILLI…FLGL, IGMG…AYLV, LRTL…EMVI, LLGI…VALL, VIYG…FAAL, and SIAL…SGLV.

Belongs to the NqrDE/RnfAE family. As to quaternary structure, the complex is composed of six subunits: RnfA, RnfB, RnfC, RnfD, RnfE and RnfG.

The protein resides in the cell inner membrane. In terms of biological role, part of a membrane-bound complex that couples electron transfer with translocation of ions across the membrane. In Histophilus somni (strain 129Pt) (Haemophilus somnus), this protein is Ion-translocating oxidoreductase complex subunit A.